The chain runs to 536 residues: Inactive phospholipase D5 (536 aa).

Residues 69–89 form a helical membrane-spanning segment; it reads IVIFALVCCFAILVALIFSAV. Residue N121 is glycosylated (N-linked (GlcNAc...) asparagine). Residues 215–242 form the PLD phosphodiesterase 1 domain; it reads NKGRLQSSFWIVDKQHVYIGSAGLDWQS. An N-linked (GlcNAc...) asparagine glycan is attached at N302. The PLD phosphodiesterase 2 domain maps to 434–460; it reads FPRLNRNKYMVTDGAAYIGNFDWVGND.

The protein belongs to the phospholipase D family.

Its subcellular location is the membrane. The sequence is that of Inactive phospholipase D5 (PLD5) from Homo sapiens (Human).